The primary structure comprises 158 residues: 3-hydroxyacyl-[acyl-carrier-protein] dehydratase FabZ (158 aa).

The active site involves H60.

The protein belongs to the thioester dehydratase family. FabZ subfamily.

The protein resides in the cytoplasm. It catalyses the reaction a (3R)-hydroxyacyl-[ACP] = a (2E)-enoyl-[ACP] + H2O. Its function is as follows. Involved in unsaturated fatty acids biosynthesis. Catalyzes the dehydration of short chain beta-hydroxyacyl-ACPs and long chain saturated and unsaturated beta-hydroxyacyl-ACPs. In Zymomonas mobilis subsp. mobilis (strain ATCC 31821 / ZM4 / CP4), this protein is 3-hydroxyacyl-[acyl-carrier-protein] dehydratase FabZ.